The primary structure comprises 287 residues: Ribosomal RNA small subunit methyltransferase A (287 aa).

Positions 28, 30, 55, 77, 103, and 123 each coordinate S-adenosyl-L-methionine.

It belongs to the class I-like SAM-binding methyltransferase superfamily. rRNA adenine N(6)-methyltransferase family. RsmA subfamily.

Its subcellular location is the cytoplasm. The catalysed reaction is adenosine(1518)/adenosine(1519) in 16S rRNA + 4 S-adenosyl-L-methionine = N(6)-dimethyladenosine(1518)/N(6)-dimethyladenosine(1519) in 16S rRNA + 4 S-adenosyl-L-homocysteine + 4 H(+). Its function is as follows. Specifically dimethylates two adjacent adenosines (A1518 and A1519) in the loop of a conserved hairpin near the 3'-end of 16S rRNA in the 30S particle. May play a critical role in biogenesis of 30S subunits. The polypeptide is Ribosomal RNA small subunit methyltransferase A (Rhodopseudomonas palustris (strain BisA53)).